The primary structure comprises 141 residues: Hemoglobin subunit alpha-D (141 aa).

Residues 1–141 (MLTAEDKKLI…VAAVLAEKYR (141 aa)) form the Globin domain. 2 residues coordinate heme b: His-58 and His-87.

It belongs to the globin family. Heterotetramer of two alpha-D chains and two beta chains. As to expression, red blood cells.

In terms of biological role, involved in oxygen transport from the lung to the various peripheral tissues. This Apus apus (Common swift) protein is Hemoglobin subunit alpha-D (HBAD).